The following is a 115-amino-acid chain: Large ribosomal subunit protein bL19 (115 aa).

The protein belongs to the bacterial ribosomal protein bL19 family.

In terms of biological role, this protein is located at the 30S-50S ribosomal subunit interface and may play a role in the structure and function of the aminoacyl-tRNA binding site. This Finegoldia magna (strain ATCC 29328 / DSM 20472 / WAL 2508) (Peptostreptococcus magnus) protein is Large ribosomal subunit protein bL19.